Consider the following 127-residue polypeptide: Small ribosomal subunit protein bS6 (127 aa).

This sequence belongs to the bacterial ribosomal protein bS6 family.

Functionally, binds together with bS18 to 16S ribosomal RNA. This is Small ribosomal subunit protein bS6 from Sulfurovum sp. (strain NBC37-1).